Consider the following 540-residue polypeptide: Chaperonin GroEL (540 aa).

ATP-binding positions include Thr-29–Pro-32, Asp-86–Thr-90, Gly-413, Asn-476–Ala-478, and Asp-492. The tract at residues Asp-520–Met-540 is disordered.

Belongs to the chaperonin (HSP60) family. Forms a cylinder of 14 subunits composed of two heptameric rings stacked back-to-back. Interacts with the co-chaperonin GroES.

The protein localises to the cytoplasm. It carries out the reaction ATP + H2O + a folded polypeptide = ADP + phosphate + an unfolded polypeptide.. Together with its co-chaperonin GroES, plays an essential role in assisting protein folding. The GroEL-GroES system forms a nano-cage that allows encapsulation of the non-native substrate proteins and provides a physical environment optimized to promote and accelerate protein folding. This Ligilactobacillus salivarius (strain UCC118) (Lactobacillus salivarius) protein is Chaperonin GroEL.